The primary structure comprises 418 residues: Gamma-glutamyl phosphate reductase (418 aa).

The protein belongs to the gamma-glutamyl phosphate reductase family.

It is found in the cytoplasm. It catalyses the reaction L-glutamate 5-semialdehyde + phosphate + NADP(+) = L-glutamyl 5-phosphate + NADPH + H(+). The protein operates within amino-acid biosynthesis; L-proline biosynthesis; L-glutamate 5-semialdehyde from L-glutamate: step 2/2. In terms of biological role, catalyzes the NADPH-dependent reduction of L-glutamate 5-phosphate into L-glutamate 5-semialdehyde and phosphate. The product spontaneously undergoes cyclization to form 1-pyrroline-5-carboxylate. In Geotalea daltonii (strain DSM 22248 / JCM 15807 / FRC-32) (Geobacter daltonii), this protein is Gamma-glutamyl phosphate reductase.